The primary structure comprises 186 residues: LSM12 homolog B (186 aa).

One can recognise a Sm domain in the interval 1-74; the sequence is MSSLAPCFTV…CMDIEIVKEA (74 aa). An AD domain is found at 84–186; that stretch reads EPIDLPMIRE…VVQNFCSKQF (103 aa).

It belongs to the LSM12 family. As to quaternary structure, interacts with Sbat; along with Sbat and Vlet, may form an accessory subcomplex involved in SMN complex function.

Functionally, may have an accessory function in the survival motor neuron (SMN) complex. The chain is LSM12 homolog B from Drosophila melanogaster (Fruit fly).